Here is a 394-residue protein sequence, read N- to C-terminus: MADLSNTKLNYVTFNQDHSCLAVATSRGFRIYHTDPFSKIFNSDEGNVTIIEMLFSTSLVAMVRSPRHLVIQNTKRGSIICDLTFPTAVLAVRLNRKTLAVVLEEEIYVYDIGNMALKHTIATSPNPNAIFALSPMSDRSYIAYPMPKPREDQGERRPAHAPPLSEYVPPTSGALMVFDTTAGKAVNVIEAHKMPLCCIALNHEGTKVATASERGTIVRVHSVPEGHKLFEFRRGTIPSTIYNMSFNLSSTLLCVSSSSETVHIFRLASAQNANAGGAGPAALETPGSPRANRWSRSKSIDGSEYSPSGDSDSSPRGETPEAGPSGPSAARRQSGTFGSMLRRSSQIVSRSVAGAVVPYLPQSVAEMWEPQRDFASVKIPKPTNAGDALLGPCL.

One copy of the WD 1 repeat lies at 4–42 (LSNTKLNYVTFNQDHSCLAVATSRGFRIYHTDPFSKIFN). The interval 146–165 (MPKPREDQGERRPAHAPPLS) is disordered. Residues 148–158 (KPREDQGERRP) show a composition bias toward basic and acidic residues. WD repeat units lie at residues 191-231 (AHKM…KLFE) and 236-275 (TIPS…NANA). Residues 232–236 (FRRGT) carry the L/FRRG motif motif. The tract at residues 274 to 342 (NAGGAGPAAL…QSGTFGSMLR (69 aa)) is disordered. Positions 302-312 (GSEYSPSGDSD) are enriched in low complexity. Positions 331 to 342 (RRQSGTFGSMLR) are enriched in polar residues.

The protein belongs to the WD repeat PROPPIN family. In terms of assembly, component of the PI(3,5)P2 regulatory complex.

Its subcellular location is the preautophagosomal structure membrane. It is found in the vacuole membrane. The protein resides in the endosome membrane. In terms of biological role, the PI(3,5)P2 regulatory complex regulates both the synthesis and turnover of phosphatidylinositol 3,5-bisphosphate (PtdIns(3,5)P2). Necessary for proper vacuole morphology. Plays an important role in osmotically-induced vacuole fragmentation. Required for cytoplasm to vacuole transport (Cvt) vesicle formation, pexophagy and starvation-induced autophagy. Involved in correct ATG9 trafficking to the pre-autophagosomal structure. Might also be involved in premeiotic DNA replication. The polypeptide is Autophagy-related protein 18 (ATG18) (Chaetomium globosum (strain ATCC 6205 / CBS 148.51 / DSM 1962 / NBRC 6347 / NRRL 1970) (Soil fungus)).